We begin with the raw amino-acid sequence, 207 residues long: Probable GTP-binding protein EngB (207 aa).

The region spanning 24–199 (GGYEVAFAGR…RGIVGGWLGL (176 aa)) is the EngB-type G domain. GTP is bound by residues 32–39 (GRSNAGKS), 59–63 (GRTQQ), 77–80 (DLPG), 144–147 (TKAD), and 178–180 (YSG). Mg(2+) contacts are provided by S39 and T61.

Belongs to the TRAFAC class TrmE-Era-EngA-EngB-Septin-like GTPase superfamily. EngB GTPase family. It depends on Mg(2+) as a cofactor.

Necessary for normal cell division and for the maintenance of normal septation. This is Probable GTP-binding protein EngB from Xanthomonas oryzae pv. oryzae (strain MAFF 311018).